The following is a 544-amino-acid chain: MSIFIGGAWPYANGSLHLGHIASLLPGDILARYYRAKGENVLYVSGSDCNGTPIAIRAKQEGVTAKDIADQYHEEFERCFRSLGFTYDCYTRTDSEHHHETVQNVFLRLLEEGHIYKKTVEQAYCETCTQFLPDRYVEGICPHCHEAARGDQCDACSAILDPLDLLEKKCKLCGSTPSVQETEHFYFALHTFQEQIKTAVENVKQTGTWRDNAIQLTERYVKEGLQDRAVSRDLPIGVPIPVEGYEDKKIYVWIEAVTGYYSASKHWAEKTGEDDQEFWDSEAKTYYVHGKDNIPFHSVIWPAVLLGIGEGAIPRHIVSNEYLTVEKRKLSTSKNWAVWVPDILERYDPDSIRYFLTVNAPENRDTDFSWREFLYSHNSELLGAYGNFVNRTLKFIEKYYGGIVPKGSIDVELKDKVEGLYKHVGEAIEQTKFKVALESIFDAVRFANKYFDEKQPWKQREDNPVSCEETIYNCVYLIANFVNLLEPFLPFSSERIRNTLSIVNRNWEPQHTLPSRIDSVQPLFERIDVKQIEHEVEKLYGAVK.

The short motif at 10–20 is the 'HIGH' region element; sequence PYANGSLHLGH. Zn(2+) is bound by residues C141, C144, C153, and C156. A 'KMSKS' region motif is present at residues 329–333; that stretch reads KLSTS. An ATP-binding site is contributed by T332.

The protein belongs to the class-I aminoacyl-tRNA synthetase family. MetG type 1 subfamily. In terms of assembly, monomer. Requires Zn(2+) as cofactor.

The protein localises to the cytoplasm. It catalyses the reaction tRNA(Met) + L-methionine + ATP = L-methionyl-tRNA(Met) + AMP + diphosphate. In terms of biological role, is required not only for elongation of protein synthesis but also for the initiation of all mRNA translation through initiator tRNA(fMet) aminoacylation. The protein is Methionine--tRNA ligase of Bacillus cereus (strain AH187).